The following is an 82-amino-acid chain: Small ribosomal subunit protein uS17c (82 aa).

It belongs to the universal ribosomal protein uS17 family. Part of the 30S ribosomal subunit.

The protein resides in the plastid. The protein localises to the chloroplast. One of the primary rRNA binding proteins, it binds specifically to the 5'-end of 16S ribosomal RNA. The sequence is that of Small ribosomal subunit protein uS17c (rps17) from Cyanidioschyzon merolae (strain NIES-3377 / 10D) (Unicellular red alga).